The primary structure comprises 837 residues: MLRTAMGLRSWLAAPWGALPPRPPLLLLLLLLLLLQPPPPTWALSPRISLPLGSEERPFLRFEAEHISNYTALLLSRDGRTLYVGAREALFALSSNLSFLPGGEYQELLWGADAEKKQQCSFKGKDPQRDCQNYIKILLPLSGSHLFTCGTAAFSPMCTYINMENFTLARDEKGNVLLEDGKGRCPFDPNFKSTALVVDGELYTGTVSSFQGNDPAISRSQSLRPTKTESSLNWLQDPAFVASAYIPESLGSLQGDDDKIYFFFSETGQEFEFFENTIVSRIARICKGDEGGERVLQQRWTSFLKAQLLCSRPDDGFPFNVLQDVFTLSPSPQDWRDTLFYGVFTSQWHRGTTEGSAVCVFTMKDVQRVFSGLYKEVNRETQQWYTVTHPVPTPRPGACITNSARERKINSSLQLPDRVLNFLKDHFLMDGQVRSRMLLLQPQARYQRVAVHRVPGLHHTYDVLFLGTGDGRLHKAVSVGPRVHIIEELQIFSSGQPVQNLLLDTHRGLLYAASHSGVVQVPMANCSLYRSCGDCLLARDPYCAWSGSSCKHVSLYQPQLATRPWIQDIEGASAKDLCSASSVVSPSFVPTGEKPCEQVQFQPNTVNTLACPLLSNLATRLWLRNGAPVNASASCHVLPTGDLLLVGTQQLGEFQCWSLEEGFQQLVASYCPEVVEDGVADQTDEGGSVPVIISTSRVSAPAGGKASWGADRSYWKEFLVMCTLFVLAVLLPVLFLLYRHRNSMKVFLKQGECASVHPKTCPVVLPPETRPLNGLGPPSTPLDHRGYQSLSDSPPGSRVFTESEKRPLSIQDSFVEVSPVCPRPRVRLGSEIRDSVV.

A signal peptide spans 1 to 43 (MLRTAMGLRSWLAAPWGALPPRPPLLLLLLLLLLLQPPPPTWA). Residues 44-717 (LSPRISLPLG…WGADRSYWKE (674 aa)) are Extracellular-facing. The Sema domain maps to 47–523 (RISLPLGSEE…SHSGVVQVPM (477 aa)). 2 N-linked (GlcNAc...) asparagine glycosylation sites follow: asparagine 69 and asparagine 96. Cystine bridges form between cysteine 120–cysteine 131 and cysteine 149–cysteine 158. Asparagine 165 carries N-linked (GlcNAc...) asparagine glycosylation. Intrachain disulfides connect cysteine 286/cysteine 399 and cysteine 310/cysteine 359. N-linked (GlcNAc...) asparagine glycosylation is found at asparagine 410 and asparagine 525. The PSI domain occupies 525-579 (NCSLYRSCGDCLLARDPYCAWSGSSCKHVSLYQPQLATRPWIQDIEGASAKDLCS). 2 disulfide bridges follow: cysteine 526/cysteine 543 and cysteine 611/cysteine 656. The region spanning 604 to 663 (NTVNTLACPLLSNLATRLWLRNGAPVNASASCHVLPTGDLLLVGTQQLGEFQCWSLEEGF) is the Ig-like C2-type domain. Asparagine 630 carries N-linked (GlcNAc...) asparagine glycosylation. Residues 718–738 (FLVMCTLFVLAVLLPVLFLLY) traverse the membrane as a helical segment. Topologically, residues 739-837 (RHRNSMKVFL…LGSEIRDSVV (99 aa)) are cytoplasmic. The tract at residues 767-805 (PETRPLNGLGPPSTPLDHRGYQSLSDSPPGSRVFTESEK) is disordered. Serine 793, serine 818, and serine 830 each carry phosphoserine.

This sequence belongs to the semaphorin family.

It is found in the membrane. In terms of biological role, inhibits axonal extension by providing local signals to specify territories inaccessible for growing axons. The chain is Semaphorin-4B from Homo sapiens (Human).